Here is a 168-residue protein sequence, read N- to C-terminus: Oleosin 18.2 kDa (168 aa).

A2 is subject to N-acetylalanine. The interval 2–45 is polar; that stretch reads AEVRDRNLPHQVQVHPQYRLDNTTGGGYGAKNYHSGPSTSQVLA. A run of 3 helical transmembrane segments spans residues 43 to 63, 76 to 96, and 97 to 117; these read VLAV…AGLT, PLFI…AMAV, and TGFL…SYVL. The tract at residues 46–117 is hydrophobic; sequence VLTLLPIGGT…TGLSSLSYVL (72 aa).

It belongs to the oleosin family.

Its subcellular location is the lipid droplet. It localises to the membrane. In terms of biological role, may have a structural role to stabilize the lipid body during desiccation of the seed by preventing coalescence of the oil. Probably interacts with both lipid and phospholipid moieties of lipid bodies. May also provide recognition signals for specific lipase anchorage in lipolysis during seedling growth. The protein is Oleosin 18.2 kDa (MATP6-A) of Gossypium hirsutum (Upland cotton).